The primary structure comprises 127 residues: Protein HI_1253 (127 aa).

4 helical membrane-spanning segments follow: residues 13-33, 61-81, 82-102, and 107-127; these read VIML…LLVI, LIVS…WWLV, AKFA…SKKV, and SIFF…AYLK.

The protein belongs to the SirB2 family.

It is found in the cell inner membrane. The chain is Protein HI_1253 from Haemophilus influenzae (strain ATCC 51907 / DSM 11121 / KW20 / Rd).